The sequence spans 366 residues: Peptide chain release factor 2 (366 aa).

An N5-methylglutamine modification is found at Q251.

This sequence belongs to the prokaryotic/mitochondrial release factor family. In terms of processing, methylated by PrmC. Methylation increases the termination efficiency of RF2.

It is found in the cytoplasm. Peptide chain release factor 2 directs the termination of translation in response to the peptide chain termination codons UGA and UAA. This is Peptide chain release factor 2 from Campylobacter concisus (strain 13826).